Here is a 555-residue protein sequence, read N- to C-terminus: Formate--tetrahydrofolate ligase (555 aa).

Residue 65-72 (TPAGEGKT) participates in ATP binding.

The protein belongs to the formate--tetrahydrofolate ligase family.

The catalysed reaction is (6S)-5,6,7,8-tetrahydrofolate + formate + ATP = (6R)-10-formyltetrahydrofolate + ADP + phosphate. The protein operates within one-carbon metabolism; tetrahydrofolate interconversion. In Syntrophomonas wolfei subsp. wolfei (strain DSM 2245B / Goettingen), this protein is Formate--tetrahydrofolate ligase.